The primary structure comprises 351 residues: Tropomodulin-2 (351 aa).

At S25 the chain carries Phosphoserine.

Belongs to the tropomodulin family. As to quaternary structure, binds to the N-terminus of tropomyosin and to actin. As to expression, neuronal-tissue specific.

The protein resides in the cytoplasm. The protein localises to the cytoskeleton. In terms of biological role, blocks the elongation and depolymerization of the actin filaments at the pointed end. The Tmod/TM complex contributes to the formation of the short actin protofilament, which in turn defines the geometry of the membrane skeleton. The sequence is that of Tropomodulin-2 (Tmod2) from Mus musculus (Mouse).